The sequence spans 660 residues: Bifunctional polymyxin resistance protein ArnA (660 aa).

The formyltransferase ArnAFT stretch occupies residues 1–304 (MKTVVFAYHD…MLGLVQGSRL (304 aa)). Residue 86–88 (HLI) participates in (6R)-10-formyltetrahydrofolate binding. Catalysis depends on His-104, which acts as the Proton donor; for formyltransferase activity. (6R)-10-formyltetrahydrofolate is bound by residues Arg-114 and 136–140 (VKRAD). The segment at 314–660 (RRTRVLILGV…RTVDLTDKPS (347 aa)) is dehydrogenase ArnADH. NAD(+) is bound by residues Asp-347 and 368–369 (DI). Residues Ala-393, Tyr-398, and 432-433 (TS) contribute to the UDP-alpha-D-glucuronate site. Glu-434 functions as the Proton acceptor; for decarboxylase activity in the catalytic mechanism. UDP-alpha-D-glucuronate is bound by residues Arg-460, Asn-492, 526 to 535 (KLIDGGKQKR), and Tyr-613. The active-site Proton donor; for decarboxylase activity is Arg-619.

This sequence in the N-terminal section; belongs to the Fmt family. UDP-L-Ara4N formyltransferase subfamily. In the C-terminal section; belongs to the NAD(P)-dependent epimerase/dehydratase family. UDP-glucuronic acid decarboxylase subfamily. As to quaternary structure, homohexamer, formed by a dimer of trimers.

The catalysed reaction is UDP-alpha-D-glucuronate + NAD(+) = UDP-beta-L-threo-pentopyranos-4-ulose + CO2 + NADH. The enzyme catalyses UDP-4-amino-4-deoxy-beta-L-arabinose + (6R)-10-formyltetrahydrofolate = UDP-4-deoxy-4-formamido-beta-L-arabinose + (6S)-5,6,7,8-tetrahydrofolate + H(+). It participates in nucleotide-sugar biosynthesis; UDP-4-deoxy-4-formamido-beta-L-arabinose biosynthesis; UDP-4-deoxy-4-formamido-beta-L-arabinose from UDP-alpha-D-glucuronate: step 1/3. It functions in the pathway nucleotide-sugar biosynthesis; UDP-4-deoxy-4-formamido-beta-L-arabinose biosynthesis; UDP-4-deoxy-4-formamido-beta-L-arabinose from UDP-alpha-D-glucuronate: step 3/3. Its pathway is bacterial outer membrane biogenesis; lipopolysaccharide biosynthesis. Its function is as follows. Bifunctional enzyme that catalyzes the oxidative decarboxylation of UDP-glucuronic acid (UDP-GlcUA) to UDP-4-keto-arabinose (UDP-Ara4O) and the addition of a formyl group to UDP-4-amino-4-deoxy-L-arabinose (UDP-L-Ara4N) to form UDP-L-4-formamido-arabinose (UDP-L-Ara4FN). The modified arabinose is attached to lipid A and is required for resistance to polymyxin and cationic antimicrobial peptides. This is Bifunctional polymyxin resistance protein ArnA from Shigella flexneri serotype 5b (strain 8401).